The sequence spans 464 residues: ATP synthase subunit beta 2 (464 aa).

Residue Gly-147 to Thr-154 coordinates ATP.

It belongs to the ATPase alpha/beta chains family. In terms of assembly, F-type ATPases have 2 components, CF(1) - the catalytic core - and CF(0) - the membrane proton channel. CF(1) has five subunits: alpha(3), beta(3), gamma(1), delta(1), epsilon(1). CF(0) has four main subunits: a(1), b(1), b'(1) and c(9-12).

It localises to the cell inner membrane. It catalyses the reaction ATP + H2O + 4 H(+)(in) = ADP + phosphate + 5 H(+)(out). Produces ATP from ADP in the presence of a proton gradient across the membrane. The catalytic sites are hosted primarily by the beta subunits. In Cereibacter sphaeroides (strain ATCC 17023 / DSM 158 / JCM 6121 / CCUG 31486 / LMG 2827 / NBRC 12203 / NCIMB 8253 / ATH 2.4.1.) (Rhodobacter sphaeroides), this protein is ATP synthase subunit beta 2.